Consider the following 160-residue polypeptide: NADH-quinone oxidoreductase subunit I (160 aa).

4Fe-4S ferredoxin-type domains lie at 52–81 and 91–120; these read RRYSNGEERCIACKLCEVICPAQAIVIEAE and TRYDIDMTKCIYCGLCQEACPVDAIVEGPN. Residues C61, C64, C67, C71, C100, C103, C106, and C110 each coordinate [4Fe-4S] cluster.

It belongs to the complex I 23 kDa subunit family. NDH-1 is composed of 14 different subunits. Subunits NuoA, H, J, K, L, M, N constitute the membrane sector of the complex. [4Fe-4S] cluster is required as a cofactor.

The protein localises to the cell membrane. It catalyses the reaction a quinone + NADH + 5 H(+)(in) = a quinol + NAD(+) + 4 H(+)(out). In terms of biological role, NDH-1 shuttles electrons from NADH, via FMN and iron-sulfur (Fe-S) centers, to quinones in the respiratory chain. The immediate electron acceptor for the enzyme in this species is believed to be ubiquinone. Couples the redox reaction to proton translocation (for every two electrons transferred, four hydrogen ions are translocated across the cytoplasmic membrane), and thus conserves the redox energy in a proton gradient. The sequence is that of NADH-quinone oxidoreductase subunit I from Wolbachia sp. subsp. Brugia malayi (strain TRS).